Reading from the N-terminus, the 477-residue chain is Bifunctional protein HldE (477 aa).

The segment at 1-318 (MQIQLPMFQN…RRAVQQEQGA (318 aa)) is ribokinase. 195 to 198 (NLSE) contacts ATP. D264 is a catalytic residue. The cytidylyltransferase stretch occupies residues 344 to 477 (FTNGCFDIIH…VEKIRKDQVK (134 aa)).

It in the N-terminal section; belongs to the carbohydrate kinase PfkB family. In the C-terminal section; belongs to the cytidylyltransferase family. In terms of assembly, homodimer.

The enzyme catalyses D-glycero-beta-D-manno-heptose 7-phosphate + ATP = D-glycero-beta-D-manno-heptose 1,7-bisphosphate + ADP + H(+). The catalysed reaction is D-glycero-beta-D-manno-heptose 1-phosphate + ATP + H(+) = ADP-D-glycero-beta-D-manno-heptose + diphosphate. Its pathway is nucleotide-sugar biosynthesis; ADP-L-glycero-beta-D-manno-heptose biosynthesis; ADP-L-glycero-beta-D-manno-heptose from D-glycero-beta-D-manno-heptose 7-phosphate: step 1/4. It participates in nucleotide-sugar biosynthesis; ADP-L-glycero-beta-D-manno-heptose biosynthesis; ADP-L-glycero-beta-D-manno-heptose from D-glycero-beta-D-manno-heptose 7-phosphate: step 3/4. Functionally, catalyzes the phosphorylation of D-glycero-D-manno-heptose 7-phosphate at the C-1 position to selectively form D-glycero-beta-D-manno-heptose-1,7-bisphosphate. In terms of biological role, catalyzes the ADP transfer from ATP to D-glycero-beta-D-manno-heptose 1-phosphate, yielding ADP-D-glycero-beta-D-manno-heptose. The polypeptide is Bifunctional protein HldE (Hahella chejuensis (strain KCTC 2396)).